The following is a 317-amino-acid chain: Glycine--tRNA ligase alpha subunit (317 aa).

It belongs to the class-II aminoacyl-tRNA synthetase family. As to quaternary structure, tetramer of two alpha and two beta subunits.

The protein localises to the cytoplasm. The catalysed reaction is tRNA(Gly) + glycine + ATP = glycyl-tRNA(Gly) + AMP + diphosphate. This is Glycine--tRNA ligase alpha subunit from Leptothrix cholodnii (strain ATCC 51168 / LMG 8142 / SP-6) (Leptothrix discophora (strain SP-6)).